A 182-amino-acid chain; its full sequence is Bifunctional protein PyrR (182 aa).

Residues 99–111 carry the PRPP-binding motif; sequence IVLVDDVIFTGRT.

Belongs to the purine/pyrimidine phosphoribosyltransferase family. PyrR subfamily. In terms of assembly, homodimer and homohexamer; in equilibrium.

The catalysed reaction is UMP + diphosphate = 5-phospho-alpha-D-ribose 1-diphosphate + uracil. Regulates transcriptional attenuation of the pyrimidine nucleotide (pyr) operon by binding in a uridine-dependent manner to specific sites on pyr mRNA. This disrupts an antiterminator hairpin in the RNA and favors formation of a downstream transcription terminator, leading to a reduced expression of downstream genes. Functionally, also displays a weak uracil phosphoribosyltransferase activity which is not physiologically significant. This chain is Bifunctional protein PyrR, found in Caldicellulosiruptor saccharolyticus (strain ATCC 43494 / DSM 8903 / Tp8T 6331).